We begin with the raw amino-acid sequence, 309 residues long: Tagatose-6-phosphate kinase (309 aa).

This sequence belongs to the carbohydrate kinase PfkB family. LacC subfamily.

The catalysed reaction is D-tagatofuranose 6-phosphate + ATP = D-tagatofuranose 1,6-bisphosphate + ADP + H(+). The protein operates within carbohydrate metabolism; D-tagatose 6-phosphate degradation; D-glyceraldehyde 3-phosphate and glycerone phosphate from D-tagatose 6-phosphate: step 1/2. This Streptococcus pyogenes serotype M12 (strain MGAS2096) protein is Tagatose-6-phosphate kinase.